The primary structure comprises 306 residues: MHLSAHIDPLQIILCTEIDEACIQFIKSQIEGIARACGPRMQANFEGVLIPYVDVLGKFLYRACCLRYATMGEEAARIVLAKQDRSKGLVLATTGERMTSLIFSLVIDLVGVHVNKLLKQASYSSSFKLPFGLRNLLPEAVISKEKHLVYILNSFKPILLKLVSIIRFLCLTMKGHCATVSQLLLGLKYISLDEINPEEKKKVLTLLLLLGSRLIASILQHSNSYFDQHTISSITDERDLEDKNKLPFIPEGNRKCSLCMEFIHCPAATECGHIFCWSCINGWTSKKSECPLCRAFSSPSKIILLR.

Residues 1-52 (MHLSAHIDPLQIILCTEIDEACIQFIKSQIEGIARACGPRMQANFEGVLIPY) are Peroxisomal matrix-facing. A helical membrane pass occupies residues 53–84 (VDVLGKFLYRACCLRYATMGEEAARIVLAKQD). Topologically, residues 85–147 (RSKGLVLATT…PEAVISKEKH (63 aa)) are cytoplasmic. A helical transmembrane segment spans residues 148-174 (LVYILNSFKPILLKLVSIIRFLCLTMK). Residues 175-202 (GHCATVSQLLLGLKYISLDEINPEEKKK) are Peroxisomal matrix-facing. The chain crosses the membrane as a helical span at residues 203-219 (VLTLLLLLGSRLIASIL). The Cytoplasmic segment spans residues 220 to 306 (QHSNSYFDQH…SSPSKIILLR (87 aa)). The Zn(2+) site is built by Cys256, Cys259, Cys271, His273, Cys276, Cys279, Cys290, and Cys293. The RING-type zinc finger occupies 256 to 294 (CSLCMEFIHCPAATECGHIFCWSCINGWTSKKSECPLCR).

It belongs to the pex2/pex10/pex12 family. In terms of assembly, component of the PEX2-PEX10-PEX12 retrotranslocation channel, composed of PEX2, PEX10 and PEX12.

Its subcellular location is the peroxisome membrane. It catalyses the reaction S-ubiquitinyl-[E2 ubiquitin-conjugating enzyme]-L-cysteine + [acceptor protein]-L-lysine = [E2 ubiquitin-conjugating enzyme]-L-cysteine + N(6)-ubiquitinyl-[acceptor protein]-L-lysine.. Its pathway is protein modification; protein ubiquitination. With respect to regulation, the E3 ubiquitin-protein ligase activity is stimulated by PEX12. Functionally, E3 ubiquitin-protein ligase component of a retrotranslocation channel required for peroxisome organization by mediating export of the PEX5 receptor from peroxisomes to the cytosol, thereby promoting PEX5 recycling. The retrotranslocation channel is composed of PEX2, PEX10 and PEX12; each subunit contributing transmembrane segments that coassemble into an open channel that specifically allows the passage of PEX5 through the peroxisomal membrane. PEX10 also regulates PEX5 recycling by acting as a E3 ubiquitin-protein ligase. When PEX5 recycling is compromised, PEX10 catalyzes polyubiquitination of PEX5 during its passage through the retrotranslocation channel, leading to its degradation. This is Peroxisome biogenesis factor 10 (pas4) from Schizosaccharomyces pombe (strain 972 / ATCC 24843) (Fission yeast).